A 445-amino-acid chain; its full sequence is Ribosomal protein uS12 methylthiotransferase RimO (445 aa).

Positions 4 to 119 (IKVALVSLGC…LLESIKVFLK (116 aa)) constitute an MTTase N-terminal domain. Residues Cys-13, Cys-48, Cys-82, Cys-156, Cys-160, and Cys-163 each coordinate [4Fe-4S] cluster. The Radical SAM core domain occupies 142–372 (TTPTYTAYVR…MILQQSISKD (231 aa)). The 67-residue stretch at 375–441 (KEKIGKIYEV…EYDLIGVVYN (67 aa)) folds into the TRAM domain.

It belongs to the methylthiotransferase family. RimO subfamily. [4Fe-4S] cluster serves as cofactor.

The protein localises to the cytoplasm. The enzyme catalyses L-aspartate(89)-[ribosomal protein uS12]-hydrogen + (sulfur carrier)-SH + AH2 + 2 S-adenosyl-L-methionine = 3-methylsulfanyl-L-aspartate(89)-[ribosomal protein uS12]-hydrogen + (sulfur carrier)-H + 5'-deoxyadenosine + L-methionine + A + S-adenosyl-L-homocysteine + 2 H(+). In terms of biological role, catalyzes the methylthiolation of an aspartic acid residue of ribosomal protein uS12. The protein is Ribosomal protein uS12 methylthiotransferase RimO of Clostridium botulinum (strain Langeland / NCTC 10281 / Type F).